Reading from the N-terminus, the 1338-residue chain is Centrosomal P4.1-associated protein (1338 aa).

Disordered regions lie at residues 78 to 99 and 190 to 211; these read QKLESNSPYKPQSDKSETHTGF and GLSLLPDDQSQKHRSPGNTTTG. Ser260 and Ser317 each carry phosphoserine. The tract at residues 320–395 is alpha/beta-tubulin binding; it reads VANIEERPIK…FTNAKSKFQK (76 aa). 3 disordered regions span residues 387-415, 437-480, and 522-552; these read TNAKSKFQKGKESKLVTNQSTSEDQPLFK, PILK…QTGK, and QGKDRLPLSTGPASRLAAKSPIRETMKESES. Residues 401-410 show a composition bias toward polar residues; the sequence is LVTNQSTSED. Phosphoserine is present on Ser541. Basic and acidic residues predominate over residues 542 to 551; sequence PIRETMKESE. Ser590 and Ser596 each carry phosphoserine; by PLK2. 3 disordered regions span residues 612 to 790, 846 to 903, and 1088 to 1158; these read HRMS…LSMS, VKRG…DNAR, and TQVE…HPDG. The segment covering 636–651 has biased composition (basic and acidic residues); sequence NRSEDLDHTAREKESE. Positions 680–690 are enriched in polar residues; that stretch reads QKSTSENQTEW. Basic and acidic residues predominate over residues 718–765; it reads STEDRERGISSREDSPQVCDDKGPFKDTRTQEDKRRDVDLDLSDKDYS. The residue at position 760 (Ser760) is a Phosphoserine. The segment covering 781-790 has biased composition (low complexity); the sequence is PSRSSSLSMS. Residues 896–1338 are interaction with STIL; that stretch reads QPPGDNARSQ…EGNVLMDTEL (443 aa).

It belongs to the TCP10 family. As to quaternary structure, forms homodimers. Associates with microtubules plus ends; binds to beta-tubulin subunits exposed on microtubule outer surface at its distal tip; also associates with microtubule lattice. Associated with the gamma-tubulin complex. Interacts with the head domain of EPB41. Interacts with LYST. Interacts with CEP152 (via C-terminus). Interacts with STIL. Forms a complex with STIL and SASS6. Phosphorylation at Ser-590 and Ser-596 by PLK2 is required for procentriole formation and centriole elongation. Phosphorylation by PLK2 oscillates during the cell cycle: it increases at G1/S transition and decreases during the exit from mitosis. Phosphorylation at Ser-596 is also mediated by PLK4 but is not a critical step in PLK4 function in procentriole assembly.

It is found in the cytoplasm. Its subcellular location is the cytoskeleton. The protein resides in the microtubule organizing center. It localises to the centrosome. The protein localises to the centriole. Its function is as follows. Plays an important role in cell division and centrosome function by participating in centriole duplication. Inhibits microtubule nucleation from the centrosome. Involved in the regulation of slow processive growth of centriolar microtubules. Acts as microtubule plus-end tracking protein that stabilizes centriolar microtubules and inhibits microtubule polymerization and extension from the distal ends of centrioles. Required for centriole elongation and for STIL-mediated centriole amplification. Required for the recruitment of CEP295 to the proximal end of new-born centrioles at the centriolar microtubule wall during early S phase in a PLK4-dependent manner. May be involved in the control of centriolar-microtubule growth by acting as a regulator of tubulin release. This is Centrosomal P4.1-associated protein (CPAP) from Pan troglodytes (Chimpanzee).